Here is a 132-residue protein sequence, read N- to C-terminus: Small ribosomal subunit protein uS8 (132 aa).

This sequence belongs to the universal ribosomal protein uS8 family. As to quaternary structure, part of the 30S ribosomal subunit. Contacts proteins S5 and S12.

In terms of biological role, one of the primary rRNA binding proteins, it binds directly to 16S rRNA central domain where it helps coordinate assembly of the platform of the 30S subunit. The polypeptide is Small ribosomal subunit protein uS8 (Alkaliphilus oremlandii (strain OhILAs) (Clostridium oremlandii (strain OhILAs))).